A 202-amino-acid polypeptide reads, in one-letter code: Translation initiation factor IF-3 (202 aa).

The interval 172-202 is disordered; the sequence is KTRASARHPEVPGAGSVQDIDATGDTDGSPH.

This sequence belongs to the IF-3 family. In terms of assembly, monomer.

It is found in the cytoplasm. Its function is as follows. IF-3 binds to the 30S ribosomal subunit and shifts the equilibrium between 70S ribosomes and their 50S and 30S subunits in favor of the free subunits, thus enhancing the availability of 30S subunits on which protein synthesis initiation begins. In Mycobacterium leprae (strain TN), this protein is Translation initiation factor IF-3.